Consider the following 487-residue polypeptide: Putative KilA-N domain-containing protein L37 (487 aa).

Positions 1 to 12 (MKVQKSSKKPLK) are enriched in basic residues. The disordered stretch occupies residues 1–137 (MKVQKSSKKP…DINSDDDNNL (137 aa)). Residues 22–34 (KSGSKSMKSSKSS) show a composition bias toward low complexity. Acidic residues-rich tracts occupy residues 47–77 (DSEISDNESFDSEISDSESSDNESSDNESSD) and 111–136 (VLDDESDDDNQSDNESSDINSDDDNN). The region spanning 175-284 (EISKGIYGTF…HKVSKIVNDY (110 aa)) is the KilA-N domain. Residues 290–338 (FDKHEQLIKGKDDKIAELTRKIDKQTSLMKDQKSTIKEQDKKINELLSK) are a coiled coil.

The chain is Putative KilA-N domain-containing protein L37 from Acanthamoeba polyphaga mimivirus (APMV).